A 666-amino-acid chain; its full sequence is Probable cytochrome c oxidase subunit 1 (666 aa).

2 helical membrane-spanning segments follow: residues 16 to 36 and 57 to 77; these read IPLI…VWVV and IGVM…SDAI. Heme b is bound at residue histidine 105. 13 helical membrane-spanning segments follow: residues 108 to 128, 142 to 162, 192 to 212, 234 to 254, 277 to 297, 315 to 335, 346 to 366, 380 to 400, 413 to 433, 456 to 476, 493 to 513, 591 to 611, and 612 to 632; these read IMIF…VVPL, SVGF…LVIG, SLQI…TTVL, SNLL…MLLL, LIWA…FGIF, MVLA…HHFF, IFGI…YNWL, MLWA…GVLV, MFLV…GAFA, FWFT…AGML, WMLV…CQIM, SPTG…LIWH, and IWWM…VFAW. The Cu cation site is built by histidine 283, tyrosine 287, histidine 332, and histidine 333. The segment at residues 283–287 is a cross-link (1'-histidyl-3'-tyrosine (His-Tyr)); that stretch reads HPEVY. The heme b site is built by histidine 418 and histidine 420.

Belongs to the heme-copper respiratory oxidase family.

The protein localises to the cell membrane. It catalyses the reaction 4 Fe(II)-[cytochrome c] + O2 + 8 H(+)(in) = 4 Fe(III)-[cytochrome c] + 2 H2O + 4 H(+)(out). Its pathway is energy metabolism; oxidative phosphorylation. The sequence is that of Probable cytochrome c oxidase subunit 1 from Bradyrhizobium diazoefficiens (strain JCM 10833 / BCRC 13528 / IAM 13628 / NBRC 14792 / USDA 110).